The following is a 125-amino-acid chain: MKPGNTSFNMVSFRMVWTAMMATLLVAGASSAGTRSSEDLSAPEDRSLSKRLVFDPSCAGVYDRVLLGKLNRLCDDCYNVFREPNVATECRSNCFYNLAFVQCLEYLMPPSLHEEYQANVQMVGK.

The N-terminal stretch at 1–34 is a signal peptide; the sequence is MKPGNTSFNMVSFRMVWTAMMATLLVAGASSAGT. Cystine bridges form between cysteine 58-cysteine 94, cysteine 74-cysteine 90, and cysteine 77-cysteine 103. Position 123 is a valine amide (valine 123).

Belongs to the arthropod CHH/MIH/GIH/VIH hormone family. As to expression, produced by the medulla terminalis X-organ in the eyestalks and transported to the sinus gland where they are stored and released.

It localises to the secreted. Its function is as follows. Hormone found in the sinus gland of isopods and decapods which controls the blood sugar level. Has a secretagogue action over the amylase released from the midgut gland. May act as a stress hormone and may be involved in the control of molting and reproduction. The chain is Crustacean hyperglycemic hormones 5 from Penaeus japonicus (Kuruma prawn).